A 101-amino-acid polypeptide reads, in one-letter code: Small ribosomal subunit protein uS14 (101 aa).

Positions 46-72 are disordered; that stretch reads FELNRQPRDASPVRVRNRDSRDGRPRG. Over residues 61-70 the composition is skewed to basic and acidic residues; the sequence is RNRDSRDGRP.

Belongs to the universal ribosomal protein uS14 family. As to quaternary structure, part of the 30S ribosomal subunit. Contacts proteins S3 and S10.

Functionally, binds 16S rRNA, required for the assembly of 30S particles and may also be responsible for determining the conformation of the 16S rRNA at the A site. In Corynebacterium diphtheriae (strain ATCC 700971 / NCTC 13129 / Biotype gravis), this protein is Small ribosomal subunit protein uS14.